The following is a 487-amino-acid chain: MDKGQHFVFFVLTTVLLLRESSHAGAMRNDAAASKDTDLRGPEENLPTLTVTTILEDPYVMVRRAELEGYCIDLLKALASMLHFSYKVKVVGDGKYGAVSSNGNWTGMIGEILRQEADIAVAPLTVTSAREEVVSFTTPFLQTGIGILLRKDTMSQEMSFFHFLAPFSKETWTGLLFAYILTCFCLFLVARLSPCEWNEPKNEENHFTFLNSLWFGAGALALQGVTPRPKALSVRVIAAIWWLFTIALLAAYIANFTALLSSGSEQLPIQTFEDLVKQRKLEFGTLDGSSTFYYFKNSKNPIHQMIYEYMDKRRDHVLVKTYQEAVQRVMDSNYAFIGESISQDLAAARHCNLIRAPEVIGARGFGIATAQASPWTKKLSIAVLKLRESGDLDYLRNKWWETSCLHKSRERWSPLQPQALGGLFLTLAIGLALGVIAAVVELSNKSRHAAGHVKKSCCSIFTEEMCTRLRIKENTRQSQETSGRANA.

An N-terminal signal peptide occupies residues 1–23 (MDKGQHFVFFVLTTVLLLRESSH). Topologically, residues 24–169 (AGAMRNDAAA…FFHFLAPFSK (146 aa)) are extracellular. An N-linked (GlcNAc...) asparagine glycan is attached at Asn104. A helical membrane pass occupies residues 170–190 (ETWTGLLFAYILTCFCLFLVA). The Cytoplasmic portion of the chain corresponds to 191-235 (RLSPCEWNEPKNEENHFTFLNSLWFGAGALALQGVTPRPKALSVR). Residues 236–256 (VIAAIWWLFTIALLAAYIANF) traverse the membrane as a helical segment. Topologically, residues 257 to 419 (TALLSSGSEQ…ERWSPLQPQA (163 aa)) are extracellular. A helical membrane pass occupies residues 420–440 (LGGLFLTLAIGLALGVIAAVV). Residues 441 to 487 (ELSNKSRHAAGHVKKSCCSIFTEEMCTRLRIKENTRQSQETSGRANA) lie on the Cytoplasmic side of the membrane.

It belongs to the glutamate-gated ion channel (TC 1.A.10.1) family.

The protein localises to the cell membrane. The protein resides in the postsynaptic cell membrane. Receptor for glutamate. L-glutamate acts as an excitatory neurotransmitter at many synapses in the central nervous system. The postsynaptic actions of Glu are mediated by a variety of receptors that are named according to their selective agonists. This Anas platyrhynchos (Mallard) protein is Probable glutamate receptor (KBP).